A 468-amino-acid polypeptide reads, in one-letter code: Putative magnesium transporter MRS2-G (468 aa).

2 disordered regions span residues 1–76 (MGRR…AGKV) and 183–204 (GQPG…QVPR). 2 stretches are compositionally biased toward low complexity: residues 14–23 (ASNASTSSST) and 31–45 (RLPS…SSPS). The span at 46-67 (PASPSPPPPSASHPAPPSPPLA) shows a compositional bias: pro residues. The span at 187–201 (GDDHGEKHDDSHGDQ) shows a compositional bias: basic and acidic residues. The next 2 helical transmembrane spans lie at 402-422 (LTLT…GAFA) and 437-457 (FFWP…IVLL).

This sequence belongs to the CorA metal ion transporter (MIT) (TC 1.A.35.5) family. Interacts with CYCB2-2.

Its subcellular location is the membrane. Its function is as follows. Putative magnesium transporter. The chain is Putative magnesium transporter MRS2-G (MRS2-G) from Oryza sativa subsp. japonica (Rice).